Here is a 131-residue protein sequence, read N- to C-terminus: MSWQVYVDEHLMCEIEGNHLTSAAIIGQDGSVWAQSQNFPQLKPEEVAGIVGDFADPGTLAPTGLYIGGTKYMVIQGEPGAVIRGKKGPGGATVKKTGMALVIGIYDEPMTPGQCNMIVERLGDYLIDQGL.

This sequence belongs to the profilin family. Occurs in many kinds of cells as a complex with monomeric actin in a 1:1 ratio.

It localises to the cytoplasm. Its subcellular location is the cytoskeleton. Its function is as follows. Binds to actin and affects the structure of the cytoskeleton. At high concentrations, profilin prevents the polymerization of actin, whereas it enhances it at low concentrations. By binding to PIP2, it inhibits the formation of IP3 and DG. The polypeptide is Profilin (Cucumis melo (Muskmelon)).